Here is a 512-residue protein sequence, read N- to C-terminus: Methionine--tRNA ligase (512 aa).

Residues 11-21 (YYASGKPHIGH) carry the 'HIGH' region motif. 4 residues coordinate Zn(2+): C126, C129, C143, and H147. The short motif at 301 to 305 (KMSKS) is the 'KMSKS' region element. K304 lines the ATP pocket.

The protein belongs to the class-I aminoacyl-tRNA synthetase family. MetG type 2A subfamily. Monomer. Requires Zn(2+) as cofactor.

It localises to the cytoplasm. The catalysed reaction is tRNA(Met) + L-methionine + ATP = L-methionyl-tRNA(Met) + AMP + diphosphate. Its function is as follows. Is required not only for elongation of protein synthesis but also for the initiation of all mRNA translation through initiator tRNA(fMet) aminoacylation. This chain is Methionine--tRNA ligase (metG), found in Mycoplasma pneumoniae (strain ATCC 29342 / M129 / Subtype 1) (Mycoplasmoides pneumoniae).